Here is a 448-residue protein sequence, read N- to C-terminus: Zinc finger and BTB domain-containing protein 44 (448 aa).

Residues 31–98 (CDITIRVQDK…AYTATLSINT (68 aa)) form the BTB domain. A compositionally biased stretch (basic and acidic residues) spans 289–298 (LSDEEVHEEV). A disordered region spans residues 289-320 (LSDEEVHEEVSQPVSASQSSMSDQQTVPGSEQ). A compositionally biased stretch (low complexity) spans 299–313 (SQPVSASQSSMSDQQ). 2 C2H2-type zinc fingers span residues 394–416 (FQCP…MLIH) and 422–444 (FQCD…RLKH).

It is found in the nucleus. The polypeptide is Zinc finger and BTB domain-containing protein 44 (zbtb44) (Xenopus tropicalis (Western clawed frog)).